Consider the following 202-residue polypeptide: Outer-membrane lipoprotein carrier protein (202 aa).

The first 18 residues, 1-18 (MNKLFLILLLIFSHEVFS), serve as a signal peptide directing secretion.

Belongs to the LolA family. Monomer.

Its subcellular location is the periplasm. In terms of biological role, participates in the translocation of lipoproteins from the inner membrane to the outer membrane. Only forms a complex with a lipoprotein if the residue after the N-terminal Cys is not an aspartate (The Asp acts as a targeting signal to indicate that the lipoprotein should stay in the inner membrane). This chain is Outer-membrane lipoprotein carrier protein, found in Legionella pneumophila (strain Corby).